The primary structure comprises 435 residues: Amino acid transporter AVT6C (435 aa).

The interval 1 to 24 is disordered; the sequence is MTPQIKTHLLPKQEPSSSENHGSS. A run of 11 helical transmembrane segments spans residues 28 to 48, 53 to 73, 100 to 120, 148 to 168, 181 to 201, 219 to 239, 260 to 280, 307 to 327, 354 to 374, 375 to 395, and 408 to 428; these read IVFN…PAAF, IVPA…SVGF, IAVQ…FSII, WNTR…PLVL, VSFL…ISAL, GSFW…TFHF, ISVI…YLLF, IVRL…NFSL, LALL…WYFF, QFMG…AIVL, and IVAA…ISTN.

This sequence belongs to the amino acid/polyamine transporter 2 family. Amino acid/auxin permease (AAAP) (TC 2.A.18.6) subfamily.

The protein resides in the membrane. This chain is Amino acid transporter AVT6C, found in Arabidopsis thaliana (Mouse-ear cress).